Reading from the N-terminus, the 31-residue chain is Photosystem II reaction center protein Psb30 (31 aa).

Residues 5-25 (IQLTSLLLIVIAGPLVIALLF) form a helical membrane-spanning segment.

Belongs to the Psb30/Ycf12 family. As to quaternary structure, PSII is composed of 1 copy each of membrane proteins PsbA, PsbB, PsbC, PsbD, PsbE, PsbF, PsbH, PsbI, PsbJ, PsbK, PsbL, PsbM, PsbT, PsbX, PsbY, PsbZ, Psb30/Ycf12, peripheral proteins of the oxygen-evolving complex and a large number of cofactors. It forms dimeric complexes.

Its subcellular location is the plastid. The protein localises to the chloroplast thylakoid membrane. Its function is as follows. A core subunit of photosystem II (PSII), probably helps stabilize the reaction center. This is Photosystem II reaction center protein Psb30 from Phacus acuminatus.